Here is a 426-residue protein sequence, read N- to C-terminus: Gamma-glutamyl phosphate reductase (426 aa).

Belongs to the gamma-glutamyl phosphate reductase family.

It is found in the cytoplasm. It carries out the reaction L-glutamate 5-semialdehyde + phosphate + NADP(+) = L-glutamyl 5-phosphate + NADPH + H(+). It participates in amino-acid biosynthesis; L-proline biosynthesis; L-glutamate 5-semialdehyde from L-glutamate: step 2/2. Functionally, catalyzes the NADPH-dependent reduction of L-glutamate 5-phosphate into L-glutamate 5-semialdehyde and phosphate. The product spontaneously undergoes cyclization to form 1-pyrroline-5-carboxylate. The chain is Gamma-glutamyl phosphate reductase from Cupriavidus pinatubonensis (strain JMP 134 / LMG 1197) (Cupriavidus necator (strain JMP 134)).